The chain runs to 140 residues: ATP synthase epsilon chain (140 aa).

It belongs to the ATPase epsilon chain family. F-type ATPases have 2 components, CF(1) - the catalytic core - and CF(0) - the membrane proton channel. CF(1) has five subunits: alpha(3), beta(3), gamma(1), delta(1), epsilon(1). CF(0) has three main subunits: a, b and c.

It localises to the cell inner membrane. Functionally, produces ATP from ADP in the presence of a proton gradient across the membrane. This chain is ATP synthase epsilon chain, found in Chromobacterium violaceum (strain ATCC 12472 / DSM 30191 / JCM 1249 / CCUG 213 / NBRC 12614 / NCIMB 9131 / NCTC 9757 / MK).